The following is a 208-amino-acid chain: 3-demethoxyubiquinol 3-hydroxylase (208 aa).

E57, E87, H90, E139, E171, and H174 together coordinate Fe cation.

The protein belongs to the COQ7 family. Requires Fe cation as cofactor.

It is found in the cell membrane. The catalysed reaction is a 5-methoxy-2-methyl-3-(all-trans-polyprenyl)benzene-1,4-diol + AH2 + O2 = a 3-demethylubiquinol + A + H2O. The protein operates within cofactor biosynthesis; ubiquinone biosynthesis. Catalyzes the hydroxylation of 2-nonaprenyl-3-methyl-6-methoxy-1,4-benzoquinol during ubiquinone biosynthesis. The polypeptide is 3-demethoxyubiquinol 3-hydroxylase (Burkholderia multivorans (strain ATCC 17616 / 249)).